Reading from the N-terminus, the 498-residue chain is Probable global transactivator (498 aa).

Residues 43-206 (RERRGRPHGG…YAIIHFLRCR (164 aa)) form the Helicase ATP-binding domain. Position 55-63 (55-63 (ADDMGLGKT)) interacts with ATP. The DEAH box motif lies at 157-160 (DEAH). One can recognise a Helicase C-terminal domain in the interval 337 to 493 (ELVQRVLDTP…RTALNYEDIK (157 aa)).

This sequence belongs to the SNF2/RAD54 helicase family.

This is Probable global transactivator (GTA) from Orgyia pseudotsugata (Douglas-fir tussock moth).